The primary structure comprises 450 residues: Phosphoglucosamine mutase (450 aa).

S104 acts as the Phosphoserine intermediate in catalysis. Mg(2+) contacts are provided by S104, D245, D247, and D249. Residue S104 is modified to Phosphoserine.

Belongs to the phosphohexose mutase family. Mg(2+) serves as cofactor. Activated by phosphorylation.

It carries out the reaction alpha-D-glucosamine 1-phosphate = D-glucosamine 6-phosphate. Its function is as follows. Catalyzes the conversion of glucosamine-6-phosphate to glucosamine-1-phosphate. The protein is Phosphoglucosamine mutase of Phenylobacterium zucineum (strain HLK1).